Reading from the N-terminus, the 249-residue chain is Capsid protein (249 aa).

The interval Met-1 to Asp-33 is disordered. Basic and acidic residues predominate over residues Arg-17–Lys-28.

Belongs to the closteroviridae capsid protein family.

Its subcellular location is the virion. Functionally, capsid protein self-assembles to form filamentous capsids, about 650-850 nm in length. This Beta vulgaris (Sugar beet) protein is Capsid protein.